Reading from the N-terminus, the 1218-residue chain is Probable RNA-dependent RNA polymerase SHL2 (1218 aa).

It belongs to the RdRP family.

It carries out the reaction RNA(n) + a ribonucleoside 5'-triphosphate = RNA(n+1) + diphosphate. Functionally, involved in the RNA silencing pathway. Probably required for the generation of small interfering RNAs (siRNAs). Regulates shoot apical meristem (SAM) initiation and maintenance and leaf polarization through the trans-acting siRNAS (ta-siRNAs) pathway which probably modulates the expression of the ARF2, ARF3, ARF4, ARF14 and ARF15 genes. The polypeptide is Probable RNA-dependent RNA polymerase SHL2 (SHL2) (Oryza sativa subsp. japonica (Rice)).